A 337-amino-acid polypeptide reads, in one-letter code: tRNA N6-adenosine threonylcarbamoyltransferase (337 aa).

The Fe cation site is built by histidine 111 and histidine 115. Residues 134–138 (LVSGG), aspartate 167, glycine 180, and asparagine 272 contribute to the substrate site. Aspartate 300 provides a ligand contact to Fe cation.

The protein belongs to the KAE1 / TsaD family. It depends on Fe(2+) as a cofactor.

Its subcellular location is the cytoplasm. It carries out the reaction L-threonylcarbamoyladenylate + adenosine(37) in tRNA = N(6)-L-threonylcarbamoyladenosine(37) in tRNA + AMP + H(+). Required for the formation of a threonylcarbamoyl group on adenosine at position 37 (t(6)A37) in tRNAs that read codons beginning with adenine. Is involved in the transfer of the threonylcarbamoyl moiety of threonylcarbamoyl-AMP (TC-AMP) to the N6 group of A37, together with TsaE and TsaB. TsaD likely plays a direct catalytic role in this reaction. The protein is tRNA N6-adenosine threonylcarbamoyltransferase of Erwinia tasmaniensis (strain DSM 17950 / CFBP 7177 / CIP 109463 / NCPPB 4357 / Et1/99).